Consider the following 2388-residue polypeptide: Hybrid signal transduction histidine kinase M (2388 aa).

Disordered regions lie at residues 1–32 (MSNY…NNFN), 42–61 (FNTP…NSIS), 69–111 (NECN…STPI), 123–209 (NRSN…NAYP), 237–337 (TLLN…SPKL), 361–421 (SPHG…YNDN), 430–449 (TRNT…SSSF), and 486–542 (IYTP…NNNE). The segment covering 69–82 (NECNSGGEQSPKIK) has biased composition (polar residues). Composition is skewed to low complexity over residues 83-110 (TNNN…KSTP), 125-206 (SNLN…SNSN), and 242-288 (SSNN…NNGG). Residues 293-306 (QFISSDNKYNTVGN) are compositionally biased toward polar residues. A compositionally biased stretch (basic residues) spans 309–322 (HHHHHHQLHNHRHS). 4 stretches are compositionally biased toward low complexity: residues 325–337 (QGSS…SPKL), 361–399 (SPHG…NQNN), 410–419 (NNSNDSFDYN), and 432–449 (NTGY…SSSF). Residues 489 to 505 (PPYPQPYPQPPQLPPPS) are compositionally biased toward pro residues. The segment covering 506-541 (SSSSLSKENDNVDNNNTNNNNNNNNNNNNNNNNNNN) has biased composition (low complexity). A run of 4 helical transmembrane segments spans residues 550–570 (TMNL…FLMV), 589–609 (FILI…LLVV), 645–665 (YIFL…NLFF), and 679–699 (NIST…SHIP). Residues 732-888 (NNDNKNKIND…NNNEEDDEEE (157 aa)) form a disordered region. Over residues 735–744 (NKNKINDKSD) the composition is skewed to basic and acidic residues. Low complexity predominate over residues 745–880 (NSNSITNNNN…NNNNNNNNNN (136 aa)). The next 3 helical transmembrane spans lie at 896–916 (FQIF…LIVL), 953–973 (VQFQ…LLLV), and 1025–1045 (CSVG…WMSI). The Histidine kinase domain maps to 1093-1499 (RLVQNTGSII…VFELQVPMKC (407 aa)). The span at 1236–1257 (PIHHHRHHHRHHHHHHHHHHHH) shows a compositional bias: basic residues. Residues 1236 to 1410 (PIHHHRHHHR…INNNINNNNN (175 aa)) form a disordered region. Positions 1260–1274 (DDDDYDDDNDDDNNT) are enriched in acidic residues. Basic and acidic residues predominate over residues 1286-1315 (LSDKIKDNQDENLELKKSNNDKIIENKENQ). The span at 1316–1410 (ENNNNNNNNN…INNNINNNNN (95 aa)) shows a compositional bias: low complexity. The 116-residue stretch at 1541–1656 (KILVIDDNPN…QLTVLSQLLP (116 aa)) folds into the Response regulatory 1 domain. Aspartate 1592 carries the 4-aspartylphosphate modification. 5 disordered regions span residues 1666–1702 (SNQN…NIDF), 1960–2022 (GNNS…NSSN), 2036–2121 (CKGD…DIIN), 2133–2183 (QQQL…VKSS), and 2218–2256 (NQLN…NNND). Residues 1676 to 1696 (SNGGGGGGGGGGGGGGGGGSG) show a composition bias toward gly residues. Low complexity predominate over residues 1974 to 1985 (TNNNTTTTTTTT). Over residues 1986 to 2010 (QPKKSPILTSSNGSDKSEGSTGSNR) the composition is skewed to polar residues. Positions 2054–2064 (DSSSSSSSSDS) are enriched in low complexity. Positions 2065-2076 (HGQDDHSYRLED) are enriched in basic and acidic residues. Composition is skewed to low complexity over residues 2078-2109 (SISS…SGIN) and 2133-2165 (QQQL…LPIP). A compositionally biased stretch (polar residues) spans 2169 to 2183 (INSSGASSGIKVKSS). One can recognise a Response regulatory 2 domain in the interval 2262–2383 (NILLVEDNLV…LLISLLKKLV (122 aa)). Aspartate 2313 is modified (4-aspartylphosphate).

In terms of processing, activation probably requires transfer of a phosphate group between a histidine in the kinase core (transmitter) domain and an aspartate of the receiver domain.

The protein localises to the membrane. It catalyses the reaction ATP + protein L-histidine = ADP + protein N-phospho-L-histidine.. In terms of biological role, acts as a receptor histidine kinase for a signal transduction pathway. This protein undergoes an ATP-dependent autophosphorylation at a conserved histidine residue in the kinase core, and a phosphoryl group is then transferred to a conserved aspartate residue in the receiver domain. The protein is Hybrid signal transduction histidine kinase M (dhkM) of Dictyostelium discoideum (Social amoeba).